The chain runs to 266 residues: 4-hydroxy-tetrahydrodipicolinate reductase (266 aa).

An NAD(+)-binding site is contributed by 10–15 (GPRGRM). Lys38 lines the NADP(+) pocket. Residues 99–101 (GTT) and 125–128 (APNF) each bind NAD(+). The active-site Proton donor/acceptor is His155. Residue His156 participates in (S)-2,3,4,5-tetrahydrodipicolinate binding. Lys159 functions as the Proton donor in the catalytic mechanism. 165–166 (GT) is a binding site for (S)-2,3,4,5-tetrahydrodipicolinate.

The protein belongs to the DapB family.

The protein resides in the cytoplasm. The enzyme catalyses (S)-2,3,4,5-tetrahydrodipicolinate + NAD(+) + H2O = (2S,4S)-4-hydroxy-2,3,4,5-tetrahydrodipicolinate + NADH + H(+). It carries out the reaction (S)-2,3,4,5-tetrahydrodipicolinate + NADP(+) + H2O = (2S,4S)-4-hydroxy-2,3,4,5-tetrahydrodipicolinate + NADPH + H(+). It functions in the pathway amino-acid biosynthesis; L-lysine biosynthesis via DAP pathway; (S)-tetrahydrodipicolinate from L-aspartate: step 4/4. In terms of biological role, catalyzes the conversion of 4-hydroxy-tetrahydrodipicolinate (HTPA) to tetrahydrodipicolinate. The polypeptide is 4-hydroxy-tetrahydrodipicolinate reductase (Bacillus cereus (strain Q1)).